The following is a 619-amino-acid chain: Eukaryotic translation initiation factor 2-alpha kinase 1 (619 aa).

The segment at 1-40 is disordered; sequence MLGGSSVDGERDTDDDAAGAVAAPPAIDFPAEVSDPKYDE. The segment covering 18-28 has biased composition (low complexity); that stretch reads AGAVAAPPAID. An SIFI-degron motif is present at residues 85 to 104; it reads LHSKQVFKLLCQTFIKMGLL. Positions 167 to 580 constitute a Protein kinase domain; sequence FEELAILGKG…ALQLLQSELF (414 aa). Residues 173-181 and lysine 196 contribute to the ATP site; that span reads LGKGGYGRV. Residue threonine 283 is modified to Phosphothreonine. An HRM 1 repeat occupies 408 to 413; it reads ACPYVM. Aspartate 440 (proton acceptor) is an active-site residue. 3 positions are modified to phosphothreonine; by autocatalysis: threonine 483, threonine 485, and threonine 490. The HRM 2 repeat unit spans residues 549 to 554; that stretch reads RCPVQA.

Belongs to the protein kinase superfamily. Ser/Thr protein kinase family. GCN2 subfamily. In terms of assembly, synthesized in an inactive form that binds to the N-terminal domain of CDC37. Has to be associated with a multiprotein complex containing Hsp90, CDC37 and PPP5C for maturation and activation by autophosphorylation. The phosphatase PPP5C modulates this activation. Homodimer; homodimerizes in presence of heme, forming a disulfide-linked inactive homodimer. Interacts with DELE1; binds both to full-length DELE1 and processed form of DELE1 (S-DELE1) in response to stress, leading to activate its protein kinase activity and trigger the integrated stress response (ISR). In terms of processing, activated by autophosphorylation; phosphorylated predominantly on serine and threonine residues, but also on tyrosine residues. Autophosphorylation at Thr-485 is required for kinase activation. The active autophosphorylated form apparently is largely refractory to cellular heme fluctuations. Ubiquitinated and degraded by the SIFI complex once the mitochondrial stress has been resolved, thereby providing stress response silencing. Within the SIFI complex, UBR4 initiates ubiquitin chain that are further elongated or branched by KCMF1. In terms of tissue distribution, expressed predominantly in erythroid cells, mature reticulocytes, as well as fetal liver nucleated erythroid cells. At much lower levels, expressed in hepatocytes and bone marrow-derived macrophages (at protein level).

It is found in the cytoplasm. It catalyses the reaction L-seryl-[protein] + ATP = O-phospho-L-seryl-[protein] + ADP + H(+). It carries out the reaction L-threonyl-[protein] + ATP = O-phospho-L-threonyl-[protein] + ADP + H(+). In normal conditions, the protein kinase activity is inhibited; inhibition is relieved by various stress conditions. Inhibited by heme: in presence of heme, forms a disulfide-linked inactive homodimer. Heme depletion relieves inhibition and stimulates kinase activity by autophosphorylation. Inhibited by the heme metabolites biliverdin and bilirubin. Induced by oxidative stress generated by arsenite treatment. Binding of nitric oxide (NO) to the heme iron in the N-terminal heme-binding domain activates the kinase activity, while binding of carbon monoxide (CO) suppresses kinase activity. Protein kinase activity is also activated upon binding to DELE1 in response to various stress, triggering the integrated stress response (ISR): activated by full-length DELE1 in response to iron deficiency, while it is activated by the processed form of DELE1 (S-DELE1) in response to mitochondrial stress. In terms of biological role, metabolic-stress sensing protein kinase that phosphorylates the alpha subunit of eukaryotic translation initiation factor 2 (EIF2S1/eIF-2-alpha) in response to various stress conditions. Key activator of the integrated stress response (ISR) required for adaptation to various stress, such as heme deficiency, oxidative stress, osmotic shock, mitochondrial dysfunction and heat shock. EIF2S1/eIF-2-alpha phosphorylation in response to stress converts EIF2S1/eIF-2-alpha in a global protein synthesis inhibitor, leading to a global attenuation of cap-dependent translation, while concomitantly initiating the preferential translation of ISR-specific mRNAs, such as the transcriptional activator ATF4, and hence allowing ATF4-mediated reprogramming. Acts as a key sensor of heme-deficiency: in normal conditions, binds hemin via a cysteine thiolate and histidine nitrogenous coordination, leading to inhibit the protein kinase activity. This binding occurs with moderate affinity, allowing it to sense the heme concentration within the cell: heme depletion relieves inhibition and stimulates kinase activity, activating the ISR. Thanks to this unique heme-sensing capacity, plays a crucial role to shut off protein synthesis during acute heme-deficient conditions. In red blood cells (RBCs), controls hemoglobin synthesis ensuring a coordinated regulation of the synthesis of its heme and globin moieties. It thereby plays an essential protective role for RBC survival in anemias of iron deficiency. Iron deficiency also triggers activation by full-length DELE1. Also activates the ISR in response to mitochondrial dysfunction: HRI/EIF2AK1 protein kinase activity is activated upon binding to the processed form of DELE1 (S-DELE1), thereby promoting the ATF4-mediated reprogramming. Also acts as an activator of mitophagy in response to mitochondrial damage: catalyzes phosphorylation of eIF-2-alpha (EIF2S1) following activation by S-DELE1, thereby promoting mitochondrial localization of EIF2S1, triggering PRKN-independent mitophagy. The chain is Eukaryotic translation initiation factor 2-alpha kinase 1 from Mus musculus (Mouse).